A 413-amino-acid polypeptide reads, in one-letter code: Clamp protein VP6 (413 aa).

This sequence belongs to the reoviridae clamp protein family. In terms of assembly, interacts with capsid proteins VP3, VP4 and VP7.

It is found in the virion. Its function is as follows. Located at the interface of the incomplete T=13 outer capsid and the pseudo T=2 inner capsid, 120 VP6 subunits clamp and stabilize the inner capsid shell. In Ctenopharyngodon idella (Grass carp), this protein is Clamp protein VP6 (S8).